An 84-amino-acid polypeptide reads, in one-letter code: Small ribosomal subunit protein uS17 (84 aa).

This sequence belongs to the universal ribosomal protein uS17 family. In terms of assembly, part of the 30S ribosomal subunit.

One of the primary rRNA binding proteins, it binds specifically to the 5'-end of 16S ribosomal RNA. This chain is Small ribosomal subunit protein uS17, found in Hamiltonella defensa subsp. Acyrthosiphon pisum (strain 5AT).